The following is a 304-amino-acid chain: tRNA-uridine aminocarboxypropyltransferase 1 (304 aa).

Disordered regions lie at residues 1 to 29 (MALS…QTTS) and 165 to 193 (RNKA…HEST). The segment covering 180–193 (RTTDEEGWDLHEST) has biased composition (basic and acidic residues). The DXTW motif lies at 206-209 (DSTW).

This sequence belongs to the TDD superfamily. DTWD1 family.

Its subcellular location is the nucleus. It carries out the reaction a uridine in tRNA + S-adenosyl-L-methionine = a 3-[(3S)-3-amino-3-carboxypropyl]uridine in tRNA + S-methyl-5'-thioadenosine + H(+). Functionally, catalyzes the formation of 3-(3-amino-3-carboxypropyl)uridine (acp3U) at position 20 in the D-loop of several cytoplasmic tRNAs (acp3U(20)). The polypeptide is tRNA-uridine aminocarboxypropyltransferase 1 (Mus musculus (Mouse)).